The sequence spans 331 residues: 4-hydroxythreonine-4-phosphate dehydrogenase (331 aa).

The substrate site is built by His-137 and Thr-138. A divalent metal cation is bound by residues His-167, His-212, and His-267. Residues Lys-275, Asn-284, and Arg-293 each coordinate substrate.

This sequence belongs to the PdxA family. As to quaternary structure, homodimer. The cofactor is Zn(2+). Mg(2+) is required as a cofactor. It depends on Co(2+) as a cofactor.

Its subcellular location is the cytoplasm. It catalyses the reaction 4-(phosphooxy)-L-threonine + NAD(+) = 3-amino-2-oxopropyl phosphate + CO2 + NADH. The protein operates within cofactor biosynthesis; pyridoxine 5'-phosphate biosynthesis; pyridoxine 5'-phosphate from D-erythrose 4-phosphate: step 4/5. Functionally, catalyzes the NAD(P)-dependent oxidation of 4-(phosphooxy)-L-threonine (HTP) into 2-amino-3-oxo-4-(phosphooxy)butyric acid which spontaneously decarboxylates to form 3-amino-2-oxopropyl phosphate (AHAP). This chain is 4-hydroxythreonine-4-phosphate dehydrogenase, found in Yersinia pestis bv. Antiqua (strain Angola).